Reading from the N-terminus, the 310-residue chain is tRNA dimethylallyltransferase (310 aa).

14–21 (GPTASGKT) contacts ATP. 16-21 (TASGKT) contacts substrate. The segment at 39-42 (DSMQ) is interaction with substrate tRNA.

Belongs to the IPP transferase family. In terms of assembly, monomer. Requires Mg(2+) as cofactor.

It catalyses the reaction adenosine(37) in tRNA + dimethylallyl diphosphate = N(6)-dimethylallyladenosine(37) in tRNA + diphosphate. In terms of biological role, catalyzes the transfer of a dimethylallyl group onto the adenine at position 37 in tRNAs that read codons beginning with uridine, leading to the formation of N6-(dimethylallyl)adenosine (i(6)A). This chain is tRNA dimethylallyltransferase, found in Corynebacterium jeikeium (strain K411).